The chain runs to 49 residues: MPEAVYRCAKCGREVKLDLSTTRDLRCPYCGSKILYKPRPKIPRRVKAI.

Positions 11, 27, and 30 each coordinate Zn(2+).

Belongs to the archaeal Rpo12/eukaryotic RPC10 RNA polymerase subunit family. Part of the RNA polymerase complex. Zn(2+) is required as a cofactor.

The protein localises to the cytoplasm. It carries out the reaction RNA(n) + a ribonucleoside 5'-triphosphate = RNA(n+1) + diphosphate. Functionally, DNA-dependent RNA polymerase (RNAP) catalyzes the transcription of DNA into RNA using the four ribonucleoside triphosphates as substrates. This Pyrococcus horikoshii (strain ATCC 700860 / DSM 12428 / JCM 9974 / NBRC 100139 / OT-3) protein is DNA-directed RNA polymerase subunit Rpo12.